The sequence spans 37 residues: MKVNPSVKPMCDKCRVIRRHRRVMVICVDPRHKQRQG.

It belongs to the bacterial ribosomal protein bL36 family.

The sequence is that of Large ribosomal subunit protein bL36 from Mycobacterium leprae (strain Br4923).